The following is a 330-amino-acid chain: Phosphate acyltransferase (330 aa).

Belongs to the PlsX family. In terms of assembly, homodimer. Probably interacts with PlsY.

The protein resides in the cytoplasm. It catalyses the reaction a fatty acyl-[ACP] + phosphate = an acyl phosphate + holo-[ACP]. It participates in lipid metabolism; phospholipid metabolism. Functionally, catalyzes the reversible formation of acyl-phosphate (acyl-PO(4)) from acyl-[acyl-carrier-protein] (acyl-ACP). This enzyme utilizes acyl-ACP as fatty acyl donor, but not acyl-CoA. This chain is Phosphate acyltransferase, found in Bacillus thuringiensis (strain Al Hakam).